The sequence spans 293 residues: Elongation factor Ts (293 aa).

The tract at residues 81–84 (TDFV) is involved in Mg(2+) ion dislocation from EF-Tu.

Belongs to the EF-Ts family.

It is found in the cytoplasm. In terms of biological role, associates with the EF-Tu.GDP complex and induces the exchange of GDP to GTP. It remains bound to the aminoacyl-tRNA.EF-Tu.GTP complex up to the GTP hydrolysis stage on the ribosome. In Teredinibacter turnerae (strain ATCC 39867 / T7901), this protein is Elongation factor Ts.